Here is an 89-residue protein sequence, read N- to C-terminus: Small ribosomal subunit protein uS17 (89 aa).

The protein belongs to the universal ribosomal protein uS17 family. In terms of assembly, part of the 30S ribosomal subunit.

Its function is as follows. One of the primary rRNA binding proteins, it binds specifically to the 5'-end of 16S ribosomal RNA. The polypeptide is Small ribosomal subunit protein uS17 (Coxiella burnetii (strain RSA 493 / Nine Mile phase I)).